We begin with the raw amino-acid sequence, 351 residues long: (S)-coclaurine N-methyltransferase (351 aa).

Residues Gln91–Ser92, Val126–Gly134, Gly130–Gly132, and Thr153–Gln158 each bind S-adenosyl-L-methionine. Cys326 is an active-site residue.

This sequence belongs to the CFA/CMAS family. In terms of tissue distribution, expressed in roots, stems, flower buds and at lower levels, in leaves. Restricted to sieve elements of the phloem adjacent or proximal to laticifers.

It is found in the cytoplasm. The catalysed reaction is (S)-coclaurine + S-adenosyl-L-methionine = (S)-N-methylcoclaurine + S-adenosyl-L-homocysteine + H(+). The protein operates within alkaloid biosynthesis; (S)-reticuline biosynthesis; (S)-reticuline from (S)-norcoclaurine: step 2/4. Its function is as follows. Involved in the biosynthesis of benzylisoquinoline alkaloids. N-methyltransferase methylating (S)-coclaurine. 4'-O-methylcoclaurine and norlaudanine can also be used as substrates. The chain is (S)-coclaurine N-methyltransferase from Papaver somniferum (Opium poppy).